We begin with the raw amino-acid sequence, 242 residues long: uncharacterized protein (242 aa).

3 helical membrane passes run 75 to 95 (YAIF…HNFY), 116 to 136 (IVLI…FSLI), and 176 to 196 (IQGL…LEVI). Residues 204–242 (DVEMSSMRGQAITTEPASDNTMAEGTDCNTSKDVESGSS) are disordered. Positions 210-232 (MRGQAITTEPASDNTMAEGTDCN) are enriched in polar residues. The segment covering 233 to 242 (TSKDVESGSS) has biased composition (basic and acidic residues).

It is found in the cytoplasm. It localises to the membrane. This is an uncharacterized protein from Schizosaccharomyces pombe (strain 972 / ATCC 24843) (Fission yeast).